The chain runs to 640 residues: Telomere repeat-binding protein 4 (640 aa).

A Ubiquitin-like domain is found at 343–422 (VKFSIKSLRI…LGNLGFTLEP (80 aa)). The tract at residues 442 to 464 (TDSTKLSERSAASPALETGIPLP) is disordered. The 60-residue stretch at 530 to 589 (SQRRTRRPFSVTEVEALVSAVEEVGTGRWRDVKLRSFENASHRTYVDLKDKWKTLVHTAS) folds into the HTH myb-type domain. The segment at residues 558-585 (WRDVKLRSFENASHRTYVDLKDKWKTLV) is a DNA-binding region (H-T-H motif).

Homomultimer. Interacts with SNL1 (via PAH2). Interacts with STO. In terms of tissue distribution, expressed ubiquitously. Highest expression in flowers and roots.

The protein resides in the nucleus. Functionally, binds specifically to the plant telomeric double-stranded DNA sequences 5'-TTTAGGG-3'. At least 2 repeats of telomeric sequences are required for binding. Induces DNA bending. The sequence is that of Telomere repeat-binding protein 4 (TRP4) from Arabidopsis thaliana (Mouse-ear cress).